The sequence spans 1296 residues: Histone-lysine N-methyltransferase EHMT1 (1296 aa).

Disordered regions lie at residues 1–111 (MAAA…NHVT) and 170–200 (PQTPTTAPTVPGEGSADTEDRKPTASGTDVR). Position 2 is an N-acetylalanine (Ala-2). Over residues 14-31 (QETKQDCCMKTELLREDT) the composition is skewed to basic and acidic residues. A Glycyl lysine isopeptide (Lys-Gly) (interchain with G-Cter in SUMO1); alternate cross-link involves residue Lys-23. Lys-23 is covalently cross-linked (Glycyl lysine isopeptide (Lys-Gly) (interchain with G-Cter in SUMO2); alternate). A compositionally biased stretch (polar residues) spans 77 to 89 (NTRASPQEGTNRV). Positions 97 to 106 (VSERDTEVGK) are enriched in basic and acidic residues. Glycyl lysine isopeptide (Lys-Gly) (interchain with G-Cter in SUMO2) cross-links involve residues Lys-191, Lys-229, Lys-232, Lys-315, and Lys-325. Residues 341 to 470 (SLEMDSEDED…SSPGSMEQAA (130 aa)) form a disordered region. The span at 342-360 (LEMDSEDEDSDELEDDEDH) shows a compositional bias: acidic residues. Basic and acidic residues predominate over residues 371–391 (EDSRTSKESMSETDRAAKMDG). The segment covering 392-414 (DSEEEQESPDTGEDEDGGDESDL) has biased composition (acidic residues). Lys-430 participates in a covalent cross-link: Glycyl lysine isopeptide (Lys-Gly) (interchain with G-Cter in SUMO2). Phosphoserine is present on Ser-433. Residues 438-450 (PARKRRRRSRKKP) show a composition bias toward basic residues. The residue at position 481 (Ser-481) is a Phosphoserine. Residues Lys-559, Lys-644, Lys-659, and Lys-729 each participate in a glycyl lysine isopeptide (Lys-Gly) (interchain with G-Cter in SUMO2) cross-link. The disordered stretch occupies residues 653–714 (LAPGQEKSLA…PTSGLSQGPG (62 aa)). ANK repeat units follow at residues 735–764 (FHPKQLYFSARQGELQKVLLMLVDGIDPNF), 770–799 (SKRSPLHAAAEAGHVDICHMLVQAGANIDT), 803–832 (DQRTPLMEAAENNHLDAVKYLIKAGAQVDP), 836–866 (EGSTCLHLAAKKGHYDVVQYLLSNGQMDVNC), 870–899 (GGWTPMIWATEYKHVELVKLLLSKGSDINI), 903–932 (EENICLHWAAFSGCVDIAEILLAAKCDLHA), 936–965 (HGDSPLHIAARENRYDCVVLFLSRDSDVTL), and 969–1002 (EGETPLQCASLSSQVWSALQMSKALRDSAPDKPV). The interval 903–905 (EEN) is histone H3K9me binding. Ser-1046 is modified (phosphoserine). One can recognise a Pre-SET domain in the interval 1058-1121 (QYCVCVDDCS…NCRNRVVQNG (64 aa)). Zn(2+) contacts are provided by Cys-1060, Cys-1062, Cys-1066, Cys-1071, Cys-1073, Cys-1103, Cys-1107, Cys-1109, and Cys-1113. Positions 1124-1241 (ARLQLYRTQD…AGEQLGFDYG (118 aa)) constitute an SET domain. S-adenosyl-L-methionine is bound by residues 1134–1136 (MGW), Tyr-1171, and 1198–1199 (NH). Residues 1160–1179 (DSEADVREEDSYLFDLDNKD) form an interaction with histone H3 region. Position 1201 (Cys-1201) interacts with Zn(2+). Residues 1240–1243 (YGER) are interaction with histone H3. Cys-1254 lines the Zn(2+) pocket. Arg-1255 is a binding site for S-adenosyl-L-methionine. Zn(2+) is bound by residues Cys-1256 and Cys-1261. Positions 1271–1296 (RQASAAQEPQENGLPDTSSAAAADPL) are disordered.

It belongs to the class V-like SAM-binding methyltransferase superfamily. In terms of assembly, interacts with WIZ. Part of the E2F6.com-1 complex in G0 phase composed of E2F6, MGA, MAX, TFDP1, CBX3, BAT8, EHMT1, RING1, RNF2, MBLR, L3MBTL2 and YAF2. Interacts with MPHOSPH8. Interacts with CDYL. Interacts with REST only in the presence of CDYL. Part of a complex containing at least CDYL, REST, WIZ, SETB1, EHMT1 and EHMT2. Heterodimer; heterodimerizes with EHMT2. Interacts (via ANK repeats) with RELA (when monomethylated at 'Lys-310'). Interacts with Baz2b. As to expression, ubiquitous.

Its subcellular location is the nucleus. It is found in the chromosome. The enzyme catalyses N(6)-methyl-L-lysyl(9)-[histone H3] + S-adenosyl-L-methionine = N(6),N(6)-dimethyl-L-lysyl(9)-[histone H3] + S-adenosyl-L-homocysteine + H(+). It carries out the reaction L-lysyl(9)-[histone H3] + S-adenosyl-L-methionine = N(6)-methyl-L-lysyl(9)-[histone H3] + S-adenosyl-L-homocysteine + H(+). With respect to regulation, methyltransferase activity is inhibited by BIX-01294. Efficiently inhibited by compound E72, a BIX-01294 derivative in which the diazepane ring and the benzyl are replaced with a 3-dimethylaminopropyl and a 5-aminopentyl group at sites B and C, respectively. Histone methyltransferase that specifically mono- and dimethylates 'Lys-9' of histone H3 (H3K9me1 and H3K9me2, respectively) in euchromatin. H3K9me represents a specific tag for epigenetic transcriptional repression by recruiting HP1 proteins to methylated histones. Also weakly methylates 'Lys-27' of histone H3 (H3K27me). Also required for DNA methylation, the histone methyltransferase activity is not required for DNA methylation, suggesting that these 2 activities function independently. Probably targeted to histone H3 by different DNA-binding proteins like E2F6, MGA, MAX and/or DP1. During G0 phase, it probably contributes to silencing of MYC- and E2F-responsive genes, suggesting a role in G0/G1 transition in cell cycle. In addition to the histone methyltransferase activity, also methylates non-histone proteins: mediates dimethylation of 'Lys-373' of p53/TP53. Represses the expression of mitochondrial function-related genes, perhaps by occupying their promoter regions, working in concert with probable chromatin reader Baz2b. The chain is Histone-lysine N-methyltransferase EHMT1 (Ehmt1) from Mus musculus (Mouse).